A 375-amino-acid chain; its full sequence is Protein NDRG3 (375 aa).

The segment at 326-375 is disordered; that stretch reads RSRTHSASSSGSMEIPRSRSHTSNAQLKSSSNNSLSNQIQETPQTIELSC. The span at 348-363 shows a compositional bias: low complexity; that stretch reads SNAQLKSSSNNSLSNQ. The segment covering 364–375 has biased composition (polar residues); that stretch reads IQETPQTIELSC.

This sequence belongs to the NDRG family.

The chain is Protein NDRG3 from Xenopus laevis (African clawed frog).